Here is a 723-residue protein sequence, read N- to C-terminus: MSSAPNDDCEIDKGTPSTASLFTTLMLSQPSSSTAVLQCTYCGSSCTSSQLQTCLFCGTVAYCSKEHQQLDWLTHKMICKSLQTSGMVPSNLMPQAAPAVMAPIPPTVSFDDPALTTSLLLSLQNNPILNQTISNFPPTFSITSKTEPEPSIPIQIPQRISSTSTVPFSSEGSAFKPYRNTHVFNSISSESMSSMCTSHEASLEHMSSASLAMFPTSSTAQSDISRLAQVLSLAGDSPASLALVTTSVPSTASTATIPPPATTTSSATSSGKSETITVGKEKIIQTDDPDIQIIETEGGSKPTVSRTRKRPTPSNSADPKINYKDHNKNVVYSTTLQEHQKHLQNRGLALSIHQAMVLRLRYIAEHVIRSLNEFGWAVVDNFLGSDHYKFTAKEIERLYERGLFSPGQLMEAKHKDEFHIKDIRSDHIYWYDGYDGRAKDAATVRLLISMIDSVIQHFKKRIDHDIGGRSRAMLAIYPGNGTRYVKHVDNPVKDGRCITTIYYCNENWDMATDGGTLRLYPETSMTPMDIDPRADRLVFFWSDRRNPHEVMPVFRHRFAITIWYMDKSERDKALAKGKESDAACASKKENDPTSSSLNSLIGSLLRPRKNPSTHDLSKLDLRLFPSTSSDPALVSAADEDRVDISADFQSTSSLAHPESTDSGVSLSTFNVAHNHMERTTSLQSISDHFRSERSHERRSSTSSDQDLDEGLPPPPSTNPEYYI.

Positions 39, 42, 54, 57, 63, 67, 75, and 79 each coordinate Zn(2+). The segment at 39–79 (CTYCGSSCTSSQLQTCLFCGTVAYCSKEHQQLDWLTHKMIC) adopts an MYND-type; atypical zinc-finger fold. Positions 249-270 (PSTASTATIPPPATTTSSATSS) are enriched in low complexity. Disordered regions lie at residues 249-275 (PSTA…KSET) and 294-323 (IETE…KINY). Residues 468 to 566 (GRSRAMLAIY…RFAITIWYMD (99 aa)) enclose the Fe2OG dioxygenase domain. 3 residues coordinate Fe cation: His-487, Asp-489, and His-548. Arg-557 lines the 2-oxoglutarate pocket. Positions 678 to 723 (RTTSLQSISDHFRSERSHERRSSTSSDQDLDEGLPPPPSTNPEYYI) are disordered. The span at 687-699 (DHFRSERSHERRS) shows a compositional bias: basic and acidic residues.

As to quaternary structure, interacts (via catalytic domain) with lin-10 (via N-terminus); the interaction regulates lin-10 subcellular localization; the interaction is direct. Interacts (via catalytic domain) with swan-1 (via WD 1-3 repeats); the interaction may regulate vhl-1-independent hif-1 transcriptional activity; the interaction is direct. Interacts (via C-terminus) with cysl-1; the interaction is enhanced by hydrogen disulfide and activates hif-1-mediated transcription; the interaction is direct. Fe(2+) is required as a cofactor. Requires L-ascorbate as cofactor. As to expression, in larvae and adults, expressed in pharyngeal and body wall muscles.

Its subcellular location is the cytoplasm. The protein localises to the nucleus. The protein resides in the cell projection. It is found in the dendrite. It localises to the axon. The enzyme catalyses L-prolyl-[hypoxia-inducible factor alpha subunit] + 2-oxoglutarate + O2 = trans-4-hydroxy-L-prolyl-[hypoxia-inducible factor alpha subunit] + succinate + CO2. With respect to regulation, inhibited by Co(2+) and dimethyloxalylglycine. Inhibited by the iron chelator 2, 2'-dipyridyl. In terms of biological role, cellular oxygen sensor which regulates the stability and the activity of hypoxia-inducible transcription factor, hif-1. In normoxic conditions, hydroxylates hif-1 targeting it for vhl-1-mediated proteasomal degradation. In addition, regulates hif-1 transcriptional activity in a vhl-1-independent manner and independently of its hydroxylase activity. By regulating hif-1 activity, controls several cellular responses. Mediates susceptibility to B.thuringiensis and V.cholerae pore-forming toxins and enteropathogenic E.coli. Mediates susceptibility to P.aeruginosa PAO1-mediated killing by regulating resistance to cyanide produced by P.aeruginosa. Mediates resistance to S.aureus-mediated killing. In addition, plays a role in heat acclimation, neuronal development, behavioral responses to reoxygenation and hydrogen sulfide, iron homeostasis and aging. In neurons, involved in mitochondrion fusion during reoxygenation. Involved in egg laying. Regulates the trafficking of the glutamate receptor glr-1, probably independently of hif-1, by regulating lin-10 subcellular localization in response to oxygen levels. May hydroxylate lin-10. This chain is Hypoxia-inducible factor prolyl hydroxylase, found in Caenorhabditis elegans.